Consider the following 50-residue polypeptide: DNA replication protein repEA (50 aa).

Involved in T4 DNA replication. Binds to ssDNA. This chain is DNA replication protein repEA (repEA), found in Enterobacteria phage T4 (Bacteriophage T4).